The primary structure comprises 284 residues: Tropomyosin Tod p 1.0102 (284 aa).

The stretch at 15 to 273 (KEVATDKAEQ…KERYKSISDE (259 aa)) forms a coiled coil. Residues 103–136 (EERLTSAQSKLEDASKAADESERGRKVLENRSQG) form a disordered region.

Belongs to the tropomyosin family. As to quaternary structure, homodimer. The N-terminus is blocked. Expressed in mantle muscle (at protein level).

Its function is as follows. Tropomyosin, in association with the troponin complex, plays a central role in the calcium dependent regulation of muscle contraction. This Todarodes pacificus (Japanese flying squid) protein is Tropomyosin Tod p 1.0102.